The sequence spans 376 residues: Putative dihydroorotase (376 aa).

Zn(2+)-binding residues include His-35 and His-37. Substrate-binding positions include 37–39 (HVR) and Asn-66. Asp-114, His-138, and His-187 together coordinate Zn(2+). Asn-230 contributes to the substrate binding site. Zn(2+) is bound at residue Asp-257. The active site involves Asp-257. Residues His-261 and 273–274 (YG) contribute to the substrate site.

This sequence belongs to the metallo-dependent hydrolases superfamily. DHOase family. Class I DHOase subfamily. Zn(2+) is required as a cofactor.

The catalysed reaction is (S)-dihydroorotate + H2O = N-carbamoyl-L-aspartate + H(+). Its pathway is pyrimidine metabolism; UMP biosynthesis via de novo pathway; (S)-dihydroorotate from bicarbonate: step 3/3. Catalyzes the reversible cyclization of carbamoyl aspartate to dihydroorotate. This is Putative dihydroorotase (pyrC) from Thermotoga maritima (strain ATCC 43589 / DSM 3109 / JCM 10099 / NBRC 100826 / MSB8).